Here is a 58-residue protein sequence, read N- to C-terminus: MSKTLVRKNESLDDALRRFKRSVTKAGTLQELRKREHYEKPSVKRKRKSEAARKRKKY.

A disordered region spans residues 27–58 (GTLQELRKREHYEKPSVKRKRKSEAARKRKKY). The segment covering 31 to 42 (ELRKREHYEKPS) has biased composition (basic and acidic residues). The segment covering 43 to 58 (VKRKRKSEAARKRKKY) has biased composition (basic residues).

The protein belongs to the bacterial ribosomal protein bS21 family.

This Lactococcus lactis subsp. lactis (strain IL1403) (Streptococcus lactis) protein is Small ribosomal subunit protein bS21 (rpsU).